Consider the following 452-residue polypeptide: Enolase (452 aa).

Glutamine 167 contacts (2R)-2-phosphoglycerate. The Proton donor role is filled by glutamate 209. Positions 250, 307, and 334 each coordinate Mg(2+). (2R)-2-phosphoglycerate contacts are provided by lysine 359, arginine 388, serine 389, and lysine 410. The Proton acceptor role is filled by lysine 359.

The protein belongs to the enolase family. The cofactor is Mg(2+).

It localises to the cytoplasm. It is found in the secreted. The protein localises to the cell surface. The catalysed reaction is (2R)-2-phosphoglycerate = phosphoenolpyruvate + H2O. It participates in carbohydrate degradation; glycolysis; pyruvate from D-glyceraldehyde 3-phosphate: step 4/5. Its function is as follows. Catalyzes the reversible conversion of 2-phosphoglycerate (2-PG) into phosphoenolpyruvate (PEP). It is essential for the degradation of carbohydrates via glycolysis. The sequence is that of Enolase from Mesomycoplasma hyopneumoniae (strain 7448) (Mycoplasma hyopneumoniae).